The primary structure comprises 214 residues: Cytochrome b (214 aa).

4 helical membrane passes run 31–51, 75–96, 111–131, and 176–196; these read FGSMLLTCLVIQIMTGFFLAF, WIMQNTHAIGASLFFICIYIHI, WVSGTTLLILLMATAFFGYVL, and FFALHFILPFTIISASSIHIL. The heme b site is built by His-81 and His-95. Heme b-binding residues include His-180 and His-194. A ubiquinone is bound at residue His-199.

It belongs to the cytochrome b family. In terms of assembly, the cytochrome bc1 complex contains 3 respiratory subunits (MT-CYB, CYC1 and UQCRFS1), 2 core proteins (UQCRC1 and UQCRC2) and probably 6 low-molecular weight proteins. Heme b serves as cofactor.

Its subcellular location is the mitochondrion inner membrane. Its function is as follows. Component of the ubiquinol-cytochrome c reductase complex (complex III or cytochrome b-c1 complex) that is part of the mitochondrial respiratory chain. The b-c1 complex mediates electron transfer from ubiquinol to cytochrome c. Contributes to the generation of a proton gradient across the mitochondrial membrane that is then used for ATP synthesis. The chain is Cytochrome b (MT-CYB) from Gloydius blomhoffii (Mamushi).